The sequence spans 250 residues: NAD-dependent protein deacylase (250 aa).

The Deacetylase sirtuin-type domain maps to 1–250 (MIVEVARVLA…VVHEVRRLLQ (250 aa)). 20–39 (GAGISAESGVPTFRGKDGLW) contacts NAD(+). Substrate-binding residues include tyrosine 64 and arginine 67. 98 to 101 (QNVD) lines the NAD(+) pocket. Histidine 116 acts as the Proton acceptor in catalysis. The Zn(2+) site is built by cysteine 124, cysteine 127, cysteine 150, and cysteine 153. NAD(+)-binding positions include 190-192 (GTS), 216-218 (NVE), and alanine 234.

Belongs to the sirtuin family. Class III subfamily. Zn(2+) serves as cofactor.

The protein resides in the cytoplasm. It catalyses the reaction N(6)-acetyl-L-lysyl-[protein] + NAD(+) + H2O = 2''-O-acetyl-ADP-D-ribose + nicotinamide + L-lysyl-[protein]. The enzyme catalyses N(6)-succinyl-L-lysyl-[protein] + NAD(+) + H2O = 2''-O-succinyl-ADP-D-ribose + nicotinamide + L-lysyl-[protein]. Its function is as follows. NAD-dependent lysine deacetylase and desuccinylase that specifically removes acetyl and succinyl groups on target proteins. Modulates the activities of several proteins which are inactive in their acylated form. Deacetylates the N-terminal lysine residue of Alba, the major archaeal chromatin protein and that, in turn, increases Alba's DNA binding affinity, thereby repressing transcription. The chain is NAD-dependent protein deacylase from Pyrococcus abyssi (strain GE5 / Orsay).